The sequence spans 514 residues: 2,3-bisphosphoglycerate-independent phosphoglycerate mutase (514 aa).

Residues Asp-14 and Ser-64 each coordinate Mn(2+). Ser-64 acts as the Phosphoserine intermediate in catalysis. Substrate contacts are provided by residues His-125, Arg-155 to Asp-156, Arg-187, Arg-193, Arg-263 to Arg-266, and Lys-336. Mn(2+) contacts are provided by Asp-403, His-407, Asp-444, His-445, and His-463.

It belongs to the BPG-independent phosphoglycerate mutase family. Monomer. The cofactor is Mn(2+).

The enzyme catalyses (2R)-2-phosphoglycerate = (2R)-3-phosphoglycerate. The protein operates within carbohydrate degradation; glycolysis; pyruvate from D-glyceraldehyde 3-phosphate: step 3/5. In terms of biological role, catalyzes the interconversion of 2-phosphoglycerate and 3-phosphoglycerate. In Shewanella halifaxensis (strain HAW-EB4), this protein is 2,3-bisphosphoglycerate-independent phosphoglycerate mutase.